Reading from the N-terminus, the 107-residue chain is Small ribosomal subunit protein bS18 (107 aa).

The protein belongs to the bacterial ribosomal protein bS18 family. As to quaternary structure, part of the 30S ribosomal subunit. Forms a tight heterodimer with protein bS6.

Binds as a heterodimer with protein bS6 to the central domain of the 16S rRNA, where it helps stabilize the platform of the 30S subunit. This is Small ribosomal subunit protein bS18 from Mycoplasmopsis agalactiae (strain NCTC 10123 / CIP 59.7 / PG2) (Mycoplasma agalactiae).